The chain runs to 302 residues: Probable alpha-L-glutamate ligase (302 aa).

In terms of domain architecture, ATP-grasp spans 104–287 (LQLLSRKGLG…IAGQIIEYIE (184 aa)). ATP is bound by residues lysine 141, 178–179 (EY), aspartate 187, and 211–213 (RSN). Mg(2+) is bound by residues aspartate 248, glutamate 260, and asparagine 262. 3 residues coordinate Mn(2+): aspartate 248, glutamate 260, and asparagine 262.

It belongs to the RimK family. Mg(2+) serves as cofactor. It depends on Mn(2+) as a cofactor.

This is Probable alpha-L-glutamate ligase from Chromohalobacter salexigens (strain ATCC BAA-138 / DSM 3043 / CIP 106854 / NCIMB 13768 / 1H11).